Reading from the N-terminus, the 298-residue chain is Plasmodesmata-located protein 7 (298 aa).

The signal sequence occupies residues 1–30 (MPMAKLRNIIKTLSIFFFLIAATAPSLSSA). The Extracellular portion of the chain corresponds to 31-258 (TSATDTFVFG…YKTNYGGEKT (228 aa)). Gnk2-homologous domains are found at residues 35 to 139 (DTFV…NISF) and 140 to 240 (LGQE…TDGA). 6 cysteine pairs are disulfide-bonded: cysteine 42-cysteine 117, cysteine 93-cysteine 102, cysteine 105-cysteine 130, cysteine 152-cysteine 218, cysteine 194-cysteine 203, and cysteine 206-cysteine 231. A helical membrane pass occupies residues 259–279 (FAIIIGLLAAVVLLIIFLLFL). The tract at residues 259–279 (FAIIIGLLAAVVLLIIFLLFL) is necessary and sufficient for plasmodesmal targeting. Residues 280-298 (RGVCSRGGDFSILHSFTLI) lie on the Cytoplasmic side of the membrane.

Belongs to the cysteine-rich repeat secretory protein family. Plasmodesmata-located proteins (PDLD) subfamily. (Microbial infection) Interacts with Grapevine fanleaf virus (GFLV) 2B-MP. In terms of tissue distribution, highly expressed in lateral root and elongation zone.

The protein resides in the cell membrane. It localises to the cell junction. It is found in the plasmodesma. Modulates cell-to-cell trafficking. This is Plasmodesmata-located protein 7 from Arabidopsis thaliana (Mouse-ear cress).